Here is a 156-residue protein sequence, read N- to C-terminus: LIM domain only protein 3 (156 aa).

LIM zinc-binding domains follow at residues 22-84 (KGCA…LFGV) and 86-148 (GNCA…GLMK).

The protein is LIM domain only protein 3 of Xenopus laevis (African clawed frog).